Here is a 349-residue protein sequence, read N- to C-terminus: UPF0324 inner membrane protein YeiH (349 aa).

Residues 1-12 (MTELTLQNHRRT) are Periplasmic-facing. A helical transmembrane segment spans residues 13 to 35 (MWHFIPGLALSAVITGVALWGGA). The Cytoplasmic segment spans residues 36–38 (IPA). Residues 39–61 (VAGAGFSALTLAILLGMVIGNTV) traverse the membrane as a helical segment. Over 62-99 (YPQIWKQCDGGVLFAKQHLLRLGIILYGFRLTFSQIAD) the chain is Periplasmic. Residues 100-122 (VGISGIVIDVLTLSSTFMLACFL) traverse the membrane as a helical segment. Over 123–131 (GQKVFGLDR) the chain is Cytoplasmic. Residues 132 to 151 (HTSWLIGAGSSICGAAAVLA) form a helical membrane-spanning segment. Over 152-162 (TEPVVKAEASK) the chain is Periplasmic. The chain crosses the membrane as a helical span at residues 163–185 (VTVAVATVVIFGTIAIFLYPAMY). Over 186–261 (PLLAHWFSPE…SPATGAEKSK (76 aa)) the chain is Cytoplasmic. Residues 262-284 (ITIPWFAIFFIVVAIFNSFHLLP) traverse the membrane as a helical segment. At 285-290 (KAVVDM) the chain is on the periplasmic side. Residues 291-313 (LVTLDTVLLAMAMAALGLTTHVS) form a helical membrane-spanning segment. Over 314 to 322 (ALKKAGAKP) the chain is Cytoplasmic. A helical membrane pass occupies residues 323 to 345 (LLMALALFAWLIIGGGAINVLIH). Over 346–349 (SLIA) the chain is Periplasmic.

The protein belongs to the UPF0324 family.

It localises to the cell inner membrane. The sequence is that of UPF0324 inner membrane protein YeiH (yeiH) from Salmonella typhi.